The primary structure comprises 391 residues: Chaperone protein DnaJ (391 aa).

The J domain occupies 2–67 (DYYDVLGVSK…QKRESYDRYG (66 aa)). The CR-type zinc-finger motif lies at 148–226 (GVKKELLVSG…CRGQGRIKDK (79 aa)). Residues Cys-161, Cys-164, Cys-178, Cys-181, Cys-200, Cys-203, Cys-214, and Cys-217 each contribute to the Zn(2+) site. 4 CXXCXGXG motif repeats span residues 161–168 (CETCSGSG), 178–185 (CDRCKGSG), 200–207 (CPECGGEG), and 214–221 (CSSCRGQG).

This sequence belongs to the DnaJ family. As to quaternary structure, homodimer. Zn(2+) is required as a cofactor.

It localises to the cytoplasm. In terms of biological role, participates actively in the response to hyperosmotic and heat shock by preventing the aggregation of stress-denatured proteins and by disaggregating proteins, also in an autonomous, DnaK-independent fashion. Unfolded proteins bind initially to DnaJ; upon interaction with the DnaJ-bound protein, DnaK hydrolyzes its bound ATP, resulting in the formation of a stable complex. GrpE releases ADP from DnaK; ATP binding to DnaK triggers the release of the substrate protein, thus completing the reaction cycle. Several rounds of ATP-dependent interactions between DnaJ, DnaK and GrpE are required for fully efficient folding. Also involved, together with DnaK and GrpE, in the DNA replication of plasmids through activation of initiation proteins. The polypeptide is Chaperone protein DnaJ (Chlamydia abortus (strain DSM 27085 / S26/3) (Chlamydophila abortus)).